A 275-amino-acid chain; its full sequence is Diaminopimelate epimerase (275 aa).

Positions 12, 45, and 65 each coordinate substrate. Residue Cys-74 is the Proton donor of the active site. Residues 75–76 (GN), Asn-158, Asn-191, and 209–210 (ER) each bind substrate. Residue Cys-218 is the Proton acceptor of the active site. 219–220 (GT) contributes to the substrate binding site.

It belongs to the diaminopimelate epimerase family. In terms of assembly, homodimer.

The protein resides in the cytoplasm. It catalyses the reaction (2S,6S)-2,6-diaminopimelate = meso-2,6-diaminopimelate. It functions in the pathway amino-acid biosynthesis; L-lysine biosynthesis via DAP pathway; DL-2,6-diaminopimelate from LL-2,6-diaminopimelate: step 1/1. In terms of biological role, catalyzes the stereoinversion of LL-2,6-diaminopimelate (L,L-DAP) to meso-diaminopimelate (meso-DAP), a precursor of L-lysine and an essential component of the bacterial peptidoglycan. This is Diaminopimelate epimerase from Shewanella denitrificans (strain OS217 / ATCC BAA-1090 / DSM 15013).